A 378-amino-acid chain; its full sequence is Probable endopolygalacturonase E (378 aa).

Residues 1-19 (MVTSSSVIVLTLWAALVSA) form the signal peptide. Residues 20–38 (SPVADPLVTPAPKLEDLEK) constitute a propeptide that is removed on maturation. Residues C43 and C61 are joined by a disulfide bond. PbH1 repeat units lie at residues 103-125 (GPLV…YLNG), 174-204 (STYL…DIGD), and 205-226 (STYI…AVNS). The active-site Proton donor is D219. Cysteines 221 and 237 form a disulfide. The active site involves H241. PbH1 repeat units follow at residues 256–277 (VKNV…RIKT), 285–307 (VSEV…VVEQ), and 317–345 (TDGI…YIVC). A glycan (N-linked (GlcNAc...) asparagine) is linked at N258. Disulfide bonds link C345–C350 and C369–C378.

The protein belongs to the glycosyl hydrolase 28 family.

It localises to the secreted. The catalysed reaction is (1,4-alpha-D-galacturonosyl)n+m + H2O = (1,4-alpha-D-galacturonosyl)n + (1,4-alpha-D-galacturonosyl)m.. Functionally, involved in maceration and soft-rotting of plant tissue. Hydrolyzes the 1,4-alpha glycosidic bonds of de-esterified pectate in the smooth region of the plant cell wall. The protein is Probable endopolygalacturonase E (pgaE) of Aspergillus niger (strain ATCC MYA-4892 / CBS 513.88 / FGSC A1513).